The sequence spans 291 residues: Probable plasmid-partitioning protein ParB (291 aa).

The protein belongs to the ParB family.

In Deinococcus radiodurans (strain ATCC 13939 / DSM 20539 / JCM 16871 / CCUG 27074 / LMG 4051 / NBRC 15346 / NCIMB 9279 / VKM B-1422 / R1), this protein is Probable plasmid-partitioning protein ParB.